Here is a 508-residue protein sequence, read N- to C-terminus: WD repeat-containing protein DDB_G0290555 (508 aa).

WD repeat units lie at residues 32-74 (TSEL…LIGE), 159-198 (NVAT…KTYS), 252-292 (FSKH…QVGS), and 295-334 (DSAG…MLHK). Residues 368–508 (ENKNRINNDD…KKFAGLKKRK (141 aa)) form a disordered region. Over residues 399–435 (MDSDDDIEDGDDNDVEFPMEADSDDSDFDLGNSDDDN) the composition is skewed to acidic residues. Basic and acidic residues predominate over residues 436–446 (ISVKKENKGDS). Positions 447 to 456 (DDSDDDSDED) are enriched in acidic residues. The segment covering 471 to 493 (NNNNNNNKGKNNKGKNNSSTKKT) has biased composition (low complexity). Positions 497-508 (LKKKFAGLKKRK) are enriched in basic residues.

This is WD repeat-containing protein DDB_G0290555 from Dictyostelium discoideum (Social amoeba).